The sequence spans 527 residues: Cytokinin dehydrogenase 6 (527 aa).

An N-terminal signal peptide occupies residues 1-22; sequence MAARCSIAFMVMASCLSVVVSG. The 182-residue stretch at 55 to 236 folds into the FAD-binding PCMH-type domain; sequence VAAAPEAVLH…TRARIGLEPA (182 aa). Gly-91 and Gly-93 together coordinate FAD. His-94 bears the Pros-8alpha-FAD histidine mark. Residues Ser-95 and Gln-99 each coordinate FAD. Residue Asn-121 is glycosylated (N-linked (GlcNAc...) asparagine). FAD is bound by residues Asp-160, Thr-165, Ser-171, Ile-175, and Ile-226. N-linked (GlcNAc...) asparagine glycosylation is found at Asn-280 and Asn-323. Residues Tyr-475, Ser-510, and Gln-513 each coordinate FAD.

It belongs to the oxygen-dependent FAD-linked oxidoreductase family. As to quaternary structure, monomer. It depends on FAD as a cofactor.

It localises to the secreted. Its subcellular location is the extracellular space. The enzyme catalyses N(6)-dimethylallyladenine + A + H2O = 3-methyl-2-butenal + adenine + AH2. Its function is as follows. Catalyzes the oxidation of cytokinins, a family of N(6)-substituted adenine derivatives that are plant hormones, where the substituent is an isopentenyl group. This Oryza sativa subsp. japonica (Rice) protein is Cytokinin dehydrogenase 6 (CKX6).